A 137-amino-acid chain; its full sequence is Large ribosomal subunit protein uL16 (137 aa).

Belongs to the universal ribosomal protein uL16 family. Part of the 50S ribosomal subunit.

Binds 23S rRNA and is also seen to make contacts with the A and possibly P site tRNAs. The chain is Large ribosomal subunit protein uL16 from Beijerinckia indica subsp. indica (strain ATCC 9039 / DSM 1715 / NCIMB 8712).